A 299-amino-acid chain; its full sequence is Maintenance of mitochondrial morphology protein 1 (299 aa).

The Lumenal portion of the chain corresponds to 1 to 15 (MTNIIFSLQPTFTQG). Residues 16-36 (LILGQLSVLVLLGLILKYLFL) traverse the membrane as a helical segment. Residues 37-299 (DSTKNPFETT…QEESKRQEEA (263 aa)) are Cytoplasmic-facing. Residues 47-68 (SYHPQFDRKPARKQQAQDSQSQ) form a disordered region. In terms of domain architecture, SMP-LTD spans 73-281 (DVESLDWFNL…LPGLASVAEA (209 aa)).

Belongs to the MMM1 family. In terms of assembly, homodimer. Component of the ER-mitochondria encounter structure (ERMES) or MDM complex, composed of MMM1, MDM10, MDM12 and MDM34. An MMM1 homodimer associates with one molecule of MDM12 on each side in a pairwise head-to-tail manner, and the SMP-LTD domains of MMM1 and MDM12 generate a continuous hydrophobic tunnel for phospholipid trafficking.

The protein resides in the endoplasmic reticulum membrane. In terms of biological role, component of the ERMES/MDM complex, which serves as a molecular tether to connect the endoplasmic reticulum (ER) and mitochondria. Components of this complex are involved in the control of mitochondrial shape and protein biogenesis, and function in nonvesicular lipid trafficking between the ER and mitochondria. The MDM12-MMM1 subcomplex functions in the major beta-barrel assembly pathway that is responsible for biogenesis of all outer membrane beta-barrel proteins, and acts in a late step after the SAM complex. The MDM10-MDM12-MMM1 subcomplex further acts in the TOM40-specific pathway after the action of the MDM12-MMM1 complex. Essential for establishing and maintaining the structure of mitochondria and maintenance of mtDNA nucleoids. This Coprinopsis cinerea (strain Okayama-7 / 130 / ATCC MYA-4618 / FGSC 9003) (Inky cap fungus) protein is Maintenance of mitochondrial morphology protein 1.